The sequence spans 255 residues: SLA class II histocompatibility antigen, DQ haplotype D alpha chain (255 aa).

Positions 1 to 23 (MVPGRVLMWGALALTAVMSACGG) are cleaved as a signal peptide. The interval 24 to 120 (EDIAADHVAS…QVPEVTVFPK (97 aa)) is alpha-1. Residues 24–217 (EDIAADHVAS…IPAPMSELTE (194 aa)) are Extracellular-facing. N-linked (GlcNAc...) asparagine glycans are attached at residues N104 and N144. The Ig-like C1-type domain occupies 113 to 205 (PEVTVFPKSP…LDKPLLKHWE (93 aa)). Positions 121 to 204 (SPVMLGQPNT…GLDKPLLKHW (84 aa)) are alpha-2. A disulfide bridge links C133 with C189. The segment at 205 to 217 (EPEIPAPMSELTE) is connecting peptide. Residues 218–240 (TVVCALGLIVGLVGIVVGTVFII) traverse the membrane as a helical segment. The Cytoplasmic segment spans residues 241–255 (QGLRSGGPSRHQGSL).

The protein belongs to the MHC class II family.

It is found in the membrane. This Sus scrofa (Pig) protein is SLA class II histocompatibility antigen, DQ haplotype D alpha chain.